We begin with the raw amino-acid sequence, 380 residues long: 1-deoxy-D-xylulose 5-phosphate reductoisomerase (380 aa).

The NADPH site is built by threonine 10, glycine 11, serine 12, isoleucine 13, glycine 36, arginine 37, asparagine 38, and asparagine 120. Lysine 121 is a 1-deoxy-D-xylulose 5-phosphate binding site. Glutamate 122 serves as a coordination point for NADPH. Aspartate 146 lines the Mn(2+) pocket. 4 residues coordinate 1-deoxy-D-xylulose 5-phosphate: serine 147, glutamate 148, serine 172, and histidine 195. Glutamate 148 contacts Mn(2+). Residue glycine 201 coordinates NADPH. The 1-deoxy-D-xylulose 5-phosphate site is built by serine 208, asparagine 213, lysine 214, and glutamate 217. Residue glutamate 217 coordinates Mn(2+).

It belongs to the DXR family. The cofactor is Mg(2+). Requires Mn(2+) as cofactor.

It catalyses the reaction 2-C-methyl-D-erythritol 4-phosphate + NADP(+) = 1-deoxy-D-xylulose 5-phosphate + NADPH + H(+). The protein operates within isoprenoid biosynthesis; isopentenyl diphosphate biosynthesis via DXP pathway; isopentenyl diphosphate from 1-deoxy-D-xylulose 5-phosphate: step 1/6. In terms of biological role, catalyzes the NADPH-dependent rearrangement and reduction of 1-deoxy-D-xylulose-5-phosphate (DXP) to 2-C-methyl-D-erythritol 4-phosphate (MEP). The polypeptide is 1-deoxy-D-xylulose 5-phosphate reductoisomerase (Listeria innocua serovar 6a (strain ATCC BAA-680 / CLIP 11262)).